The primary structure comprises 221 residues: ATP phosphoribosyltransferase (221 aa).

This sequence belongs to the ATP phosphoribosyltransferase family. Short subfamily. As to quaternary structure, heteromultimer composed of HisG and HisZ subunits.

Its subcellular location is the cytoplasm. It carries out the reaction 1-(5-phospho-beta-D-ribosyl)-ATP + diphosphate = 5-phospho-alpha-D-ribose 1-diphosphate + ATP. The protein operates within amino-acid biosynthesis; L-histidine biosynthesis; L-histidine from 5-phospho-alpha-D-ribose 1-diphosphate: step 1/9. Its function is as follows. Catalyzes the condensation of ATP and 5-phosphoribose 1-diphosphate to form N'-(5'-phosphoribosyl)-ATP (PR-ATP). Has a crucial role in the pathway because the rate of histidine biosynthesis seems to be controlled primarily by regulation of HisG enzymatic activity. The protein is ATP phosphoribosyltransferase of Anaeromyxobacter dehalogenans (strain 2CP-C).